The sequence spans 459 residues: Transcription factor AP-2-beta (459 aa).

Lys21 participates in a covalent cross-link: Glycyl lysine isopeptide (Lys-Gly) (interchain with G-Cter in SUMO). Residues 30 to 139 (HDGVPSHSSR…PQLSGLDPRR (110 aa)) form a disordered region. Polar residues predominate over residues 35–51 (SHSSRLSQLGSVSQGPY). Low complexity predominate over residues 121–132 (LLPQPRAALPQL). Ser258 carries the phosphoserine; by PKA modification. The interval 299 to 429 (RRKAANVTLL…YLTEALKGMD (131 aa)) is H-S-H (helix-span-helix), dimerization. Residues 435–459 (NTTNRHTSGEGPGSKTGDKEEKHRK) are disordered. Over residues 450-459 (TGDKEEKHRK) the composition is skewed to basic and acidic residues.

It belongs to the AP-2 family. In terms of assembly, binds DNA as a dimer. Can form homodimers or heterodimers with other AP-2 family members. Interacts with CITED4. Interacts with UBE2I. Interacts with KCTD1; this interaction represses transcription activation. Interacts with CITED2 (via C-terminus); the interaction stimulates TFAP2B-transcriptional activity. Sumoylated. Sumoylated on Lys-21; which inhibits transcriptional activity. As to expression, localizes to neurons in areas of the cerebral cortex, cerebellum and hypothalamus (at protein level).

The protein localises to the nucleus. Sequence-specific DNA-binding protein that interacts with inducible viral and cellular enhancer elements to regulate transcription of selected genes. AP-2 factors bind to the consensus sequence 5'-GCCNNNGGC-3' and activate genes involved in a large spectrum of important biological functions including proper eye, face, body wall, limb and neural tube development. They also suppress a number of genes including MCAM/MUC18, C/EBP alpha and MYC. AP-2-beta appears to be required for normal face and limb development and for proper terminal differentiation and function of renal tubular epithelia. This Mus musculus (Mouse) protein is Transcription factor AP-2-beta (Tfap2b).